The following is a 661-amino-acid chain: CD180 antigen (661 aa).

An N-terminal signal peptide occupies residues 1 to 20; the sequence is MAPDISCFFLVALFLASCRA. At 21 to 626 the chain is on the extracellular side; that stretch reads TTSSDQKCIE…RLSDVTLSCS (606 aa). One can recognise an LRRNT domain in the interval 33–53; that stretch reads VNKTYNCENLGLNEIPGTLPN. 4 N-linked (GlcNAc...) asparagine glycosylation sites follow: Asn34, Asn53, Asn70, and Asn78. 7 LRR repeats span residues 54–75, 78–99, 102–123, 126–147, 150–171, 174–195, and 201–221; these read STEC…TFSR, NLTF…TFQS, RLDT…ALSG, ALKH…PLHN, TLES…KGFP, KLKV…DMSS, and NLSL…AFDS. N-linked (GlcNAc...) asparagine glycans are attached at residues Asn201, Asn244, and Asn288. LRR repeat units lie at residues 275-296, 299-321, 322-343, 346-366, and 371-391; these read SVES…TFHC, GLQE…VGLS, TLKK…SASN, SLTH…TGCL, and NLRE…CNLQ. Residues Asn394 and Asn402 are each glycosylated (N-linked (GlcNAc...) asparagine). LRR repeat units follow at residues 397-418, 421-442, 446-466, 470-493, 497-518, 521-544, and 546-566; these read HLQS…AFKE, QLEL…SPFQ, LLKV…QLFD, ALQH…NSLQ, RLEI…AFTS, MMNH…SHLK, and IYLN…LPIL. The N-linked (GlcNAc...) asparagine glycan is linked to Asn451. The LRRCT domain occupies 577-627; sequence NPLDCTCSNIYFLEWYKENMQKLEDTEDTLCENPPLLRGVRLSDVTLSCSM. Residues 627–650 form a helical membrane-spanning segment; the sequence is MAAVGIFFLIVFLLVFAILLIFAV. The Cytoplasmic portion of the chain corresponds to 651–661; that stretch reads KYFLRWKYQHI.

It belongs to the Toll-like receptor family. M-shaped tetramer of two CD180-LY86 heterodimers. In terms of tissue distribution, B-lymphocytes and spleen. Not detected in thymus, kidney, muscle, heart, brain or liver.

It localises to the cell membrane. In terms of biological role, may cooperate with MD-1 and TLR4 to mediate the innate immune response to bacterial lipopolysaccharide (LPS) in B-cells. Leads to NF-kappa-B activation. Also involved in the life/death decision of B-cells. The chain is CD180 antigen (Cd180) from Mus musculus (Mouse).